Consider the following 497-residue polypeptide: Aspartyl/glutamyl-tRNA(Asn/Gln) amidotransferase subunit B (497 aa).

Belongs to the GatB/GatE family. GatB subfamily. In terms of assembly, heterotrimer of A, B and C subunits.

It carries out the reaction L-glutamyl-tRNA(Gln) + L-glutamine + ATP + H2O = L-glutaminyl-tRNA(Gln) + L-glutamate + ADP + phosphate + H(+). It catalyses the reaction L-aspartyl-tRNA(Asn) + L-glutamine + ATP + H2O = L-asparaginyl-tRNA(Asn) + L-glutamate + ADP + phosphate + 2 H(+). Allows the formation of correctly charged Asn-tRNA(Asn) or Gln-tRNA(Gln) through the transamidation of misacylated Asp-tRNA(Asn) or Glu-tRNA(Gln) in organisms which lack either or both of asparaginyl-tRNA or glutaminyl-tRNA synthetases. The reaction takes place in the presence of glutamine and ATP through an activated phospho-Asp-tRNA(Asn) or phospho-Glu-tRNA(Gln). The protein is Aspartyl/glutamyl-tRNA(Asn/Gln) amidotransferase subunit B of Nocardioides sp. (strain ATCC BAA-499 / JS614).